A 294-amino-acid chain; its full sequence is Pyrroline-5-carboxylate reductase (294 aa).

The protein belongs to the pyrroline-5-carboxylate reductase family.

It localises to the cytoplasm. It carries out the reaction L-proline + NADP(+) = (S)-1-pyrroline-5-carboxylate + NADPH + 2 H(+). The enzyme catalyses L-proline + NAD(+) = (S)-1-pyrroline-5-carboxylate + NADH + 2 H(+). It participates in amino-acid biosynthesis; L-proline biosynthesis; L-proline from L-glutamate 5-semialdehyde: step 1/1. In terms of biological role, catalyzes the reduction of 1-pyrroline-5-carboxylate (PCA) to L-proline. This is Pyrroline-5-carboxylate reductase from Mycobacterium leprae (strain TN).